Consider the following 174-residue polypeptide: Protein GrpE (174 aa).

The tract at residues 1 to 35 (MAQDIKNEEVEEVQEEEVVKTAEETTPEKSELDLA) is disordered. Basic and acidic residues predominate over residues 17–35 (EVVKTAEETTPEKSELDLA).

The protein belongs to the GrpE family. As to quaternary structure, homodimer.

Its subcellular location is the cytoplasm. In terms of biological role, participates actively in the response to hyperosmotic and heat shock by preventing the aggregation of stress-denatured proteins, in association with DnaK and GrpE. It is the nucleotide exchange factor for DnaK and may function as a thermosensor. Unfolded proteins bind initially to DnaJ; upon interaction with the DnaJ-bound protein, DnaK hydrolyzes its bound ATP, resulting in the formation of a stable complex. GrpE releases ADP from DnaK; ATP binding to DnaK triggers the release of the substrate protein, thus completing the reaction cycle. Several rounds of ATP-dependent interactions between DnaJ, DnaK and GrpE are required for fully efficient folding. This is Protein GrpE from Streptococcus pneumoniae serotype 4 (strain ATCC BAA-334 / TIGR4).